A 117-amino-acid chain; its full sequence is Acylphosphatase (117 aa).

The 87-residue stretch at Arg21–Pro107 folds into the Acylphosphatase-like domain. Catalysis depends on residues Arg36 and Asn54.

It belongs to the acylphosphatase family.

It carries out the reaction an acyl phosphate + H2O = a carboxylate + phosphate + H(+). This is Acylphosphatase (acyP) from Synechococcus sp. (strain RCC307).